The chain runs to 932 residues: Glycine dehydrogenase (decarboxylating) (932 aa).

Position 685 is an N6-(pyridoxal phosphate)lysine (lysine 685).

It belongs to the GcvP family. The glycine cleavage system is composed of four proteins: P, T, L and H. Requires pyridoxal 5'-phosphate as cofactor.

The catalysed reaction is N(6)-[(R)-lipoyl]-L-lysyl-[glycine-cleavage complex H protein] + glycine + H(+) = N(6)-[(R)-S(8)-aminomethyldihydrolipoyl]-L-lysyl-[glycine-cleavage complex H protein] + CO2. The glycine cleavage system catalyzes the degradation of glycine. The P protein binds the alpha-amino group of glycine through its pyridoxal phosphate cofactor; CO(2) is released and the remaining methylamine moiety is then transferred to the lipoamide cofactor of the H protein. The chain is Glycine dehydrogenase (decarboxylating) from Brucella canis (strain ATCC 23365 / NCTC 10854 / RM-666).